The chain runs to 317 residues: Aspartate carbamoyltransferase catalytic subunit (317 aa).

Positions 64 and 65 each coordinate carbamoyl phosphate. Position 92 (K92) interacts with L-aspartate. Residues R114, H142, and Q145 each coordinate carbamoyl phosphate. R176 and R230 together coordinate L-aspartate. 2 residues coordinate carbamoyl phosphate: G271 and P272.

Belongs to the aspartate/ornithine carbamoyltransferase superfamily. ATCase family. As to quaternary structure, heterododecamer (2C3:3R2) of six catalytic PyrB chains organized as two trimers (C3), and six regulatory PyrI chains organized as three dimers (R2).

It catalyses the reaction carbamoyl phosphate + L-aspartate = N-carbamoyl-L-aspartate + phosphate + H(+). It functions in the pathway pyrimidine metabolism; UMP biosynthesis via de novo pathway; (S)-dihydroorotate from bicarbonate: step 2/3. In terms of biological role, catalyzes the condensation of carbamoyl phosphate and aspartate to form carbamoyl aspartate and inorganic phosphate, the committed step in the de novo pyrimidine nucleotide biosynthesis pathway. The chain is Aspartate carbamoyltransferase catalytic subunit from Nitratidesulfovibrio vulgaris (strain ATCC 29579 / DSM 644 / CCUG 34227 / NCIMB 8303 / VKM B-1760 / Hildenborough) (Desulfovibrio vulgaris).